The chain runs to 442 residues: Protein PRRC1-A (442 aa).

A disordered region spans residues 1 to 27; the sequence is MMEESGIETTPPSTPPPSTIGTSVPAA.

It belongs to the PRRC1 family.

It localises to the golgi apparatus. This chain is Protein PRRC1-A (prrc1-a), found in Xenopus laevis (African clawed frog).